Reading from the N-terminus, the 98-residue chain is ATCTTTQQTAAYVALVSILSDSSFNQCATDSGYSMLTATALPTTAQYKLMCASTACNTMITKIVSLNPPDCELTVPTSGLVLNVYSYANGFSATCASL.

3 disulfide bridges follow: Cys3–Cys71, Cys27–Cys56, and Cys51–Cys95.

It belongs to the elicitin family.

The protein resides in the secreted. Its function is as follows. Induces local and distal defense responses (incompatible hypersensitive reaction) in plants from the solanaceae and cruciferae families. Elicits leaf necrosis and causes the accumulation of pathogenesis-related proteins. Might interact with the lipidic molecules of the plasma membrane. The polypeptide is Alpha-elicitin capsicein (Phytophthora capsici).